Consider the following 275-residue polypeptide: NH(3)-dependent NAD(+) synthetase (275 aa).

Residue 46 to 53 participates in ATP binding; the sequence is GISGGQDS. D52 contributes to the Mg(2+) binding site. R140 contributes to the deamido-NAD(+) binding site. Residue T160 coordinates ATP. E165 lines the Mg(2+) pocket. Deamido-NAD(+) is bound by residues K173 and D180. K189 and T211 together coordinate ATP. 260–261 lines the deamido-NAD(+) pocket; sequence HK.

It belongs to the NAD synthetase family. As to quaternary structure, homodimer.

It catalyses the reaction deamido-NAD(+) + NH4(+) + ATP = AMP + diphosphate + NAD(+) + H(+). It functions in the pathway cofactor biosynthesis; NAD(+) biosynthesis; NAD(+) from deamido-NAD(+) (ammonia route): step 1/1. In terms of biological role, catalyzes the ATP-dependent amidation of deamido-NAD to form NAD. Uses ammonia as a nitrogen source. The protein is NH(3)-dependent NAD(+) synthetase of Escherichia coli O139:H28 (strain E24377A / ETEC).